We begin with the raw amino-acid sequence, 178 residues long: Large ribosomal subunit protein uL6 (178 aa).

The protein belongs to the universal ribosomal protein uL6 family. In terms of assembly, part of the 50S ribosomal subunit.

Its function is as follows. This protein binds to the 23S rRNA, and is important in its secondary structure. It is located near the subunit interface in the base of the L7/L12 stalk, and near the tRNA binding site of the peptidyltransferase center. The protein is Large ribosomal subunit protein uL6 of Streptococcus gordonii (strain Challis / ATCC 35105 / BCRC 15272 / CH1 / DL1 / V288).